The sequence spans 172 residues: S-ribosylhomocysteine lyase (172 aa).

Fe cation is bound by residues His54, His58, and Cys128.

Belongs to the LuxS family. As to quaternary structure, homodimer. It depends on Fe cation as a cofactor.

It carries out the reaction S-(5-deoxy-D-ribos-5-yl)-L-homocysteine = (S)-4,5-dihydroxypentane-2,3-dione + L-homocysteine. Involved in the synthesis of autoinducer 2 (AI-2) which is secreted by bacteria and is used to communicate both the cell density and the metabolic potential of the environment. The regulation of gene expression in response to changes in cell density is called quorum sensing. Catalyzes the transformation of S-ribosylhomocysteine (RHC) to homocysteine (HC) and 4,5-dihydroxy-2,3-pentadione (DPD). The polypeptide is S-ribosylhomocysteine lyase (Vibrio parahaemolyticus serotype O3:K6 (strain RIMD 2210633)).